The following is a 208-amino-acid chain: UPF0637 protein Bcer98_2662 (208 aa).

The protein belongs to the UPF0637 family.

The polypeptide is UPF0637 protein Bcer98_2662 (Bacillus cytotoxicus (strain DSM 22905 / CIP 110041 / 391-98 / NVH 391-98)).